Reading from the N-terminus, the 185-residue chain is MSYESPQAAAVAWLPYSQLATDIDQPTLDWLFDEGSLTRRLTRLSIDHFSVTPLFEGWQPLRDDECQALGIAAGAEGWVREVYLRGHGQPWVFARSVASRSALERGGLDLETLGSRSLGELLFCDQAFIRHPLEVCTYPQAWLPSEAAHAALWGRRSRFERNGLDLLVAEVFLPALWQAAKEENR.

Positions 80, 118, and 170 each coordinate substrate.

Belongs to the UbiC family.

The protein resides in the cytoplasm. It catalyses the reaction chorismate = 4-hydroxybenzoate + pyruvate. The protein operates within cofactor biosynthesis; ubiquinone biosynthesis. In terms of biological role, removes the pyruvyl group from chorismate, with concomitant aromatization of the ring, to provide 4-hydroxybenzoate (4HB) for the ubiquinone pathway. The sequence is that of Probable chorismate pyruvate-lyase from Pseudomonas putida (strain ATCC 47054 / DSM 6125 / CFBP 8728 / NCIMB 11950 / KT2440).